Consider the following 164-residue polypeptide: Protein DOWNSTREAM OF FLC (164 aa).

The signal sequence occupies residues 1–23 (MAKSFVPLIAVLCVLVLPLAAMA). 3 cysteine pairs are disulfide-bonded: Cys36/Cys107, Cys39/Cys148, and Cys60/Cys95.

This sequence belongs to the Ole e I family.

It is found in the secreted. In terms of biological role, part of a three-gene cluster containing FLC, UFC and DFC, which is coordinately regulated in response to vernalization. Not regulated by FLX. The sequence is that of Protein DOWNSTREAM OF FLC (DFC) from Arabidopsis thaliana (Mouse-ear cress).